A 2845-amino-acid chain; its full sequence is Multiple epidermal growth factor-like domains protein 8 (2845 aa).

Residues 1–27 (MALGKVLAMALVLALAVLGSLSPGARA) form the signal peptide. Residues 28–2647 (GDCKGQRQVL…FFRQDQAHID (2620 aa)) are Extracellular-facing. 6 cysteine pairs are disulfide-bonded: Cys30–Cys57, Cys142–Cys152, Cys146–Cys158, Cys174–Cys184, Cys178–Cys191, and Cys193–Cys202. A CUB 1 domain is found at 30–140 (CKGQRQVLRE…LGFNASFRFS (111 aa)). Residue Asn50 is glycosylated (N-linked (GlcNAc...) asparagine). 2 consecutive EGF-like domains span residues 138 to 168 (RFSLCPGGCQSHGQCQPPGVCACEPGWGGPD) and 170 to 203 (GLQECSAYCGSHGTCASPLGPCRCEPGFLGRACD). An N-linked (GlcNAc...) asparagine glycan is attached at Asn217. Kelch repeat units follow at residues 241-287 (LLAV…AVAW), 290-338 (SLVL…AGHA), 346-399 (WLYV…FHAP), 402-453 (ALLV…FHTA), 459-511 (YMVV…APPS), and 525-575 (VLLV…SRDP). PSI domains are found at residues 561–613 (YCSM…GDCQ), 847–899 (SCTS…TLCP), and 900–947 (LCEE…EECP). An N-linked (GlcNAc...) asparagine glycan is attached at Asn1048. An EGF-like 3; calcium-binding domain is found at 1074 to 1115 (DVDECRLGLARCHPRATCLNTPLSYECHCQRGYQGDGISHCN). Cystine bridges form between Cys1078-Cys1091, Cys1085-Cys1100, Cys1102-Cys1114, Cys1163-Cys1171, Cys1165-Cys1179, Cys1182-Cys1191, Cys1194-Cys1208, Cys1211-Cys1224, Cys1213-Cys1231, Cys1233-Cys1242, Cys1245-Cys1259, Cys1263-Cys1302, Cys1336-Cys1367, Cys1407-Cys1421, Cys1415-Cys1433, and Cys1435-Cys1444. Laminin EGF-like domains lie at 1163 to 1210 (CGCS…GCRP) and 1211 to 1261 (CQCN…SCFR). Residues 1263-1405 (CGGRALLTNV…WGFNASVGSA (143 aa)) enclose the CUB 2 domain. Asn1271 carries N-linked (GlcNAc...) asparagine glycosylation. A Phosphothreonine modification is found at Thr1353. Residues 1403 to 1445 (GSARCGSGGPGSCPVPQECVPQDGAAGAGLCRCPQGWAGPHCR) enclose the EGF-like 4 domain. 6 Kelch repeats span residues 1522-1570 (TLWM…SFHA), 1580-1626 (AMYL…HTLT), 1632-1679 (SLLL…SAVY), 1685-1735 (SLYV…VRGS), 1796-1843 (TMVV…ESVA), and 1852-1898 (RLYI…CHGA). The segment at 1726–1745 (RDRMRNVRGSSRGLGQVPGE) is disordered. PSI domains follow at residues 1876–1916 (PCRL…SPCS), 1924–1979 (ECRR…NDCR), 2060–2118 (PCHL…ESCS), and 2120–2177 (GCAQ…LSCP). The N-linked (GlcNAc...) asparagine glycan is linked to Asn2066. The EGF-like 5 domain maps to 2178–2216 (PEDECANGHHDCNETQNCHDQPHGYECSCKTGYTMDNMT). 2 cysteine pairs are disulfide-bonded: Cys2182-Cys2195 and Cys2189-Cys2204. Asn2229 is a glycosylation site (N-linked (GlcNAc...) asparagine). Intrachain disulfides connect Cys2253–Cys2261, Cys2255–Cys2270, Cys2273–Cys2282, Cys2285–Cys2299, Cys2380–Cys2389, Cys2382–Cys2397, Cys2399–Cys2424, and Cys2427–Cys2441. Laminin EGF-like domains are found at residues 2253-2301 (CRCN…TCRP) and 2380-2443 (CQCN…QCYR). The segment at 2523-2564 (TVHIQPPPAPPPPPPPADGGPRGAGDPGGAGASSGPGAPAEP) is disordered. Residues 2527–2540 (QPPPAPPPPPPPAD) are compositionally biased toward pro residues. Residues 2542-2556 (GPRGAGDPGGAGASS) show a composition bias toward gly residues. The chain crosses the membrane as a helical span at residues 2648 to 2668 (LFVFFSVFFSCFFLFLSLCVL). Topologically, residues 2669–2845 (LWKAKQALDQ…SQDNLTSMSL (177 aa)) are cytoplasmic. The segment covering 2817–2831 (GGGAGGSGHGTGAGR) has biased composition (gly residues). The disordered stretch occupies residues 2817-2845 (GGGAGGSGHGTGAGRKGLLSQDNLTSMSL). Polar residues predominate over residues 2836–2845 (SQDNLTSMSL).

It is found in the membrane. In terms of biological role, acts as a negative regulator of hedgehog signaling. This chain is Multiple epidermal growth factor-like domains protein 8 (MEGF8), found in Homo sapiens (Human).